Here is a 348-residue protein sequence, read N- to C-terminus: Nicotinate-nucleotide pyrophosphorylase [carboxylating], chloroplastic (348 aa).

A chloroplast-targeting transit peptide spans 1–41 (MISVSRFLSPQFYAIPRSFVKMSASATQTAGEVSMGIKPPS). Substrate contacts are provided by residues arginine 139, 170-172 (TRK), arginine 194, lysine 204, glutamate 237, aspartate 264, 296-298 (SGN), and 317-319 (SGA).

Belongs to the NadC/ModD family.

It localises to the plastid. The protein localises to the chloroplast. It catalyses the reaction nicotinate beta-D-ribonucleotide + CO2 + diphosphate = quinolinate + 5-phospho-alpha-D-ribose 1-diphosphate + 2 H(+). It functions in the pathway cofactor biosynthesis; NAD(+) biosynthesis; nicotinate D-ribonucleotide from quinolinate: step 1/1. Functionally, involved in the biosynthesis of NAD(+). Catalyzes the conversion of quinolate to nicotinate to nicotinate beta-D-ribonucleotide. The sequence is that of Nicotinate-nucleotide pyrophosphorylase [carboxylating], chloroplastic from Arabidopsis thaliana (Mouse-ear cress).